Here is a 383-residue protein sequence, read N- to C-terminus: S-adenosylmethionine synthase (383 aa).

Residue H15 participates in ATP binding. D17 is a Mg(2+) binding site. A K(+)-binding site is contributed by E43. E56 and Q99 together coordinate L-methionine. The segment at 99-109 is flexible loop; sequence QSPDINQGVDR. ATP-binding positions include 164–166, 230–231, D239, 245–246, A262, and K266; these read DAK, RF, and RK. D239 contributes to the L-methionine binding site. K270 contributes to the L-methionine binding site.

It belongs to the AdoMet synthase family. Homotetramer; dimer of dimers. The cofactor is Mg(2+). K(+) serves as cofactor.

It is found in the cytoplasm. The catalysed reaction is L-methionine + ATP + H2O = S-adenosyl-L-methionine + phosphate + diphosphate. It functions in the pathway amino-acid biosynthesis; S-adenosyl-L-methionine biosynthesis; S-adenosyl-L-methionine from L-methionine: step 1/1. In terms of biological role, catalyzes the formation of S-adenosylmethionine (AdoMet) from methionine and ATP. The overall synthetic reaction is composed of two sequential steps, AdoMet formation and the subsequent tripolyphosphate hydrolysis which occurs prior to release of AdoMet from the enzyme. The chain is S-adenosylmethionine synthase from Pseudoalteromonas translucida (strain TAC 125).